The chain runs to 450 residues: Phosphoglucosamine mutase (450 aa).

Ser102 (phosphoserine intermediate) is an active-site residue. Mg(2+) is bound by residues Ser102, Asp244, Asp246, and Asp248. The residue at position 102 (Ser102) is a Phosphoserine.

This sequence belongs to the phosphohexose mutase family. It depends on Mg(2+) as a cofactor. Post-translationally, activated by phosphorylation.

It carries out the reaction alpha-D-glucosamine 1-phosphate = D-glucosamine 6-phosphate. Functionally, catalyzes the conversion of glucosamine-6-phosphate to glucosamine-1-phosphate. In Nitratidesulfovibrio vulgaris (strain ATCC 29579 / DSM 644 / CCUG 34227 / NCIMB 8303 / VKM B-1760 / Hildenborough) (Desulfovibrio vulgaris), this protein is Phosphoglucosamine mutase.